Here is a 381-residue protein sequence, read N- to C-terminus: Cobalt-precorrin-5B C(1)-methyltransferase (381 aa).

This sequence belongs to the CbiD family.

The enzyme catalyses Co-precorrin-5B + S-adenosyl-L-methionine = Co-precorrin-6A + S-adenosyl-L-homocysteine. Its pathway is cofactor biosynthesis; adenosylcobalamin biosynthesis; cob(II)yrinate a,c-diamide from sirohydrochlorin (anaerobic route): step 6/10. Functionally, catalyzes the methylation of C-1 in cobalt-precorrin-5B to form cobalt-precorrin-6A. The protein is Cobalt-precorrin-5B C(1)-methyltransferase of Clostridium botulinum (strain Alaska E43 / Type E3).